Here is a 502-residue protein sequence, read N- to C-terminus: UTP--glucose-1-phosphate uridylyltransferase 2 (502 aa).

A disordered region spans residues 1-20 (MMKPDLNSPLPQSPQLQAFG). The segment covering 9–20 (PLPQSPQLQAFG) has biased composition (polar residues). UTP contacts are provided by residues 114–117 (LNGG), Lys128, Gln191, and Gly220. Substrate is bound at residue 116–117 (GG). Substrate contacts are provided by residues His221 and 249-251 (NVD). UTP-binding residues include Asp251 and Lys390.

The protein belongs to the UDPGP type 1 family.

The enzyme catalyses alpha-D-glucose 1-phosphate + UTP + H(+) = UDP-alpha-D-glucose + diphosphate. Functionally, plays a central role as a glucosyl donor in cellular metabolic pathways. The protein is UTP--glucose-1-phosphate uridylyltransferase 2 (ugpB) of Dictyostelium discoideum (Social amoeba).